Consider the following 203-residue polypeptide: Microtubule-associated protein Jupiter (203 aa).

Ser30 carries the post-translational modification Phosphoserine. Phosphothreonine occurs at positions 41 and 102. The span at 123–132 shows a compositional bias: polar residues; that stretch reads LISKGNYNGK. Disordered stretches follow at residues 123-163 and 182-203; these read LISK…GNPV and NGGSQVINKNRVPPGGYSSGLW. Low complexity predominate over residues 133-146; it reads SGSVSSASSSVSSS. Ser135 and Ser146 each carry phosphoserine.

It belongs to the MAP Jupiter family.

The protein localises to the nucleus. Its subcellular location is the cytoplasm. It is found in the cytoskeleton. It localises to the spindle. Binds to all microtubule populations. The chain is Microtubule-associated protein Jupiter from Drosophila mojavensis (Fruit fly).